Reading from the N-terminus, the 404-residue chain is Probable tRNA sulfurtransferase (404 aa).

Positions 61-166 (EAVSERLKDV…SGYSYIMCDE (106 aa)) constitute a THUMP domain. ATP contacts are provided by residues 184 to 185 (LL), 209 to 210 (HF), Arg-266, Gly-288, and Gln-297.

The protein belongs to the ThiI family.

It is found in the cytoplasm. It carries out the reaction [ThiI sulfur-carrier protein]-S-sulfanyl-L-cysteine + a uridine in tRNA + 2 reduced [2Fe-2S]-[ferredoxin] + ATP + H(+) = [ThiI sulfur-carrier protein]-L-cysteine + a 4-thiouridine in tRNA + 2 oxidized [2Fe-2S]-[ferredoxin] + AMP + diphosphate. It catalyses the reaction [ThiS sulfur-carrier protein]-C-terminal Gly-Gly-AMP + S-sulfanyl-L-cysteinyl-[cysteine desulfurase] + AH2 = [ThiS sulfur-carrier protein]-C-terminal-Gly-aminoethanethioate + L-cysteinyl-[cysteine desulfurase] + A + AMP + 2 H(+). It functions in the pathway cofactor biosynthesis; thiamine diphosphate biosynthesis. Functionally, catalyzes the ATP-dependent transfer of a sulfur to tRNA to produce 4-thiouridine in position 8 of tRNAs, which functions as a near-UV photosensor. Also catalyzes the transfer of sulfur to the sulfur carrier protein ThiS, forming ThiS-thiocarboxylate. This is a step in the synthesis of thiazole, in the thiamine biosynthesis pathway. The sulfur is donated as persulfide by IscS. The chain is Probable tRNA sulfurtransferase from Bacillus cereus (strain ZK / E33L).